Consider the following 312-residue polypeptide: Pyridoxal kinase (312 aa).

M1 bears the N-acetylmethionine mark. Pyridoxal-binding residues include S12 and T47. Residue T47 participates in pyridoxal 5'-phosphate binding. The residue at position 59 (S59) is a Phosphoserine. Residue D113 participates in ATP binding. Na(+) is bound at residue D113. Residue D118 coordinates Mg(2+). Residue T148 coordinates Na(+). An ATP-binding site is contributed by 150 to 153 (NQFE). S164 carries the phosphoserine modification. T186 is a Na(+) binding site. Position 186–187 (186–187 (TS)) interacts with ATP. S213 carries the post-translational modification Phosphoserine. Residues 226 to 228 (VEA) and T233 each bind ATP. Pyridoxal 5'-phosphate is bound at residue 234–235 (GD). The active-site Proton acceptor is the D235. Position 285 is a phosphoserine (S285).

The protein belongs to the pyridoxine kinase family. As to quaternary structure, homodimer. Requires Zn(2+) as cofactor. The cofactor is Mg(2+).

It localises to the cytoplasm. The protein resides in the cytosol. It carries out the reaction pyridoxal + ATP = pyridoxal 5'-phosphate + ADP + H(+). It catalyses the reaction pyridoxamine + ATP = pyridoxamine 5'-phosphate + ADP + H(+). The enzyme catalyses pyridoxine + ATP = pyridoxine 5'-phosphate + ADP + H(+). Its pathway is cofactor metabolism; pyridoxal 5'-phosphate salvage; pyridoxal 5'-phosphate from pyridoxal: step 1/1. The protein operates within cofactor metabolism; pyridoxal 5'-phosphate salvage; pyridoxine 5'-phosphate from pyridoxine: step 1/1. It functions in the pathway cofactor metabolism; pyridoxal 5'-phosphate salvage; pyridoxamine 5'-phosphate from pyridoxamine: step 1/1. Activity is increased in the presence of K(+)or Na(+). Its function is as follows. Catalyzes the phosphorylation of the dietary vitamin B6 vitamers pyridoxal (PL), pyridoxine (PN) and pyridoxamine (PM) to form pyridoxal 5'-phosphate (PLP), pyridoxine 5'-phosphate (PNP) and pyridoxamine 5'-phosphate (PMP), respectively. PLP is the active form of vitamin B6, and acts as a cofactor for over 140 different enzymatic reactions. The chain is Pyridoxal kinase from Mus musculus (Mouse).